Reading from the N-terminus, the 347-residue chain is Quinolinate synthase (347 aa).

Positions 47 and 68 each coordinate iminosuccinate. Cysteine 113 provides a ligand contact to [4Fe-4S] cluster. Residues 139–141 and serine 156 each bind iminosuccinate; that span reads YAN. Cysteine 200 contributes to the [4Fe-4S] cluster binding site. Iminosuccinate contacts are provided by residues 226–228 and threonine 243; that span reads HPE. Cysteine 297 serves as a coordination point for [4Fe-4S] cluster.

Belongs to the quinolinate synthase family. Type 1 subfamily. The cofactor is [4Fe-4S] cluster.

The protein resides in the cytoplasm. It carries out the reaction iminosuccinate + dihydroxyacetone phosphate = quinolinate + phosphate + 2 H2O + H(+). Its pathway is cofactor biosynthesis; NAD(+) biosynthesis; quinolinate from iminoaspartate: step 1/1. Functionally, catalyzes the condensation of iminoaspartate with dihydroxyacetone phosphate to form quinolinate. In Enterobacter sp. (strain 638), this protein is Quinolinate synthase.